A 51-amino-acid chain; its full sequence is Large ribosomal subunit protein bL33 (51 aa).

It belongs to the bacterial ribosomal protein bL33 family.

This chain is Large ribosomal subunit protein bL33, found in Ruthia magnifica subsp. Calyptogena magnifica.